The following is a 308-amino-acid chain: Elongation factor Ts (308 aa).

The tract at residues 80–83 (TDFV) is involved in Mg(2+) ion dislocation from EF-Tu.

Belongs to the EF-Ts family.

The protein localises to the cytoplasm. Functionally, associates with the EF-Tu.GDP complex and induces the exchange of GDP to GTP. It remains bound to the aminoacyl-tRNA.EF-Tu.GTP complex up to the GTP hydrolysis stage on the ribosome. This Agrobacterium fabrum (strain C58 / ATCC 33970) (Agrobacterium tumefaciens (strain C58)) protein is Elongation factor Ts.